Consider the following 136-residue polypeptide: Large ribosomal subunit protein uL16 (136 aa).

The protein belongs to the universal ribosomal protein uL16 family. As to quaternary structure, part of the 50S ribosomal subunit.

In terms of biological role, binds 23S rRNA and is also seen to make contacts with the A and possibly P site tRNAs. In Rickettsia prowazekii (strain Madrid E), this protein is Large ribosomal subunit protein uL16.